A 231-amino-acid polypeptide reads, in one-letter code: Putative carboxymethylenebutenolidase (231 aa).

Residues aspartate 169 and histidine 200 contribute to the active site.

Belongs to the dienelactone hydrolase family.

The enzyme catalyses 2-(5-oxo-2,5-dihydrofuran-2-ylidene)acetate + H2O = 4-oxohex-2-enedioate + H(+). The protein is Putative carboxymethylenebutenolidase of Azospirillum brasilense.